The primary structure comprises 273 residues: Shikimate dehydrogenase (NADP(+)) (273 aa).

Shikimate contacts are provided by residues Ser19–Ser21 and Thr66. Residue Lys70 is the Proton acceptor of the active site. Position 82 (Glu82) interacts with NADP(+). Asn91 and Asp107 together coordinate shikimate. NADP(+) contacts are provided by residues Gly131–Ala135 and Met217. Tyr219 contributes to the shikimate binding site. NADP(+) is bound at residue Gly241.

Belongs to the shikimate dehydrogenase family. Homodimer.

The catalysed reaction is shikimate + NADP(+) = 3-dehydroshikimate + NADPH + H(+). The protein operates within metabolic intermediate biosynthesis; chorismate biosynthesis; chorismate from D-erythrose 4-phosphate and phosphoenolpyruvate: step 4/7. In terms of biological role, involved in the biosynthesis of the chorismate, which leads to the biosynthesis of aromatic amino acids. Catalyzes the reversible NADPH linked reduction of 3-dehydroshikimate (DHSA) to yield shikimate (SA). The chain is Shikimate dehydrogenase (NADP(+)) from Buchnera aphidicola subsp. Schizaphis graminum (strain Sg).